A 274-amino-acid chain; its full sequence is 3-methyl-2-oxobutanoate hydroxymethyltransferase (274 aa).

Mg(2+) contacts are provided by Asp49 and Asp88. 3-methyl-2-oxobutanoate contacts are provided by residues 49–50 (DS), Asp88, and Lys118. Mg(2+) is bound at residue Glu120. Glu187 (proton acceptor) is an active-site residue.

It belongs to the PanB family. In terms of assembly, homodecamer; pentamer of dimers. Requires Mg(2+) as cofactor.

The protein resides in the cytoplasm. The catalysed reaction is 3-methyl-2-oxobutanoate + (6R)-5,10-methylene-5,6,7,8-tetrahydrofolate + H2O = 2-dehydropantoate + (6S)-5,6,7,8-tetrahydrofolate. The protein operates within cofactor biosynthesis; (R)-pantothenate biosynthesis; (R)-pantoate from 3-methyl-2-oxobutanoate: step 1/2. Functionally, catalyzes the reversible reaction in which hydroxymethyl group from 5,10-methylenetetrahydrofolate is transferred onto alpha-ketoisovalerate to form ketopantoate. In Paramagnetospirillum magneticum (strain ATCC 700264 / AMB-1) (Magnetospirillum magneticum), this protein is 3-methyl-2-oxobutanoate hydroxymethyltransferase.